The chain runs to 245 residues: 1-(5-phosphoribosyl)-5-[(5-phosphoribosylamino)methylideneamino] imidazole-4-carboxamide isomerase (245 aa).

Residue aspartate 7 is the Proton acceptor of the active site. The Proton donor role is filled by aspartate 129.

This sequence belongs to the HisA/HisF family.

It is found in the cytoplasm. It carries out the reaction 1-(5-phospho-beta-D-ribosyl)-5-[(5-phospho-beta-D-ribosylamino)methylideneamino]imidazole-4-carboxamide = 5-[(5-phospho-1-deoxy-D-ribulos-1-ylimino)methylamino]-1-(5-phospho-beta-D-ribosyl)imidazole-4-carboxamide. Its pathway is amino-acid biosynthesis; L-histidine biosynthesis; L-histidine from 5-phospho-alpha-D-ribose 1-diphosphate: step 4/9. The chain is 1-(5-phosphoribosyl)-5-[(5-phosphoribosylamino)methylideneamino] imidazole-4-carboxamide isomerase from Escherichia coli O7:K1 (strain IAI39 / ExPEC).